Consider the following 236-residue polypeptide: Carboxymethylenebutenolidase (236 aa).

Active-site residues include Cys123, Asp171, and His202.

The protein belongs to the dienelactone hydrolase family. As to quaternary structure, monomer.

It catalyses the reaction 2-(5-oxo-2,5-dihydrofuran-2-ylidene)acetate + H2O = 4-oxohex-2-enedioate + H(+). It functions in the pathway aromatic compound metabolism; 3-chlorocatechol degradation. In terms of biological role, ring cleavage of cyclic ester dienelactone to produce maleylacetate. The sequence is that of Carboxymethylenebutenolidase (clcD) from Pseudomonas knackmussii (strain DSM 6978 / CCUG 54928 / LMG 23759 / B13).